Here is a 713-residue protein sequence, read N- to C-terminus: Cyclomaltodextrin glucanotransferase (713 aa).

A signal peptide spans 1-27; the sequence is MKKQVKWLTSVSMSVGIALGAALPVWA. Positions 28–165 are A1; sequence SPDTSVNNKL…NIKVVMDFAP (138 aa). Residues D54, N56, N59, N60, G78, and D80 each coordinate Ca(2+). Residue 127–128 participates in substrate binding; that stretch reads YW. Residue N166 coordinates Ca(2+). The segment at 166–229 is b; it reads NHTNPASSTD…NLYDLADINQ (64 aa). Substrate is bound at residue H167. A Ca(2+)-binding site is contributed by I217. 220–223 provides a ligand contact to substrate; sequence NLYD. D226 is a binding site for Ca(2+). The interval 230–434 is A2; the sequence is NNNTIDSYLK…LRKSNPALAY (205 aa). R254 provides a ligand contact to substrate. The Nucleophile role is filled by D256. 259 to 260 is a binding site for substrate; the sequence is KH. H260 provides a ligand contact to Ca(2+). E285 (proton donor) is an active-site residue. 3 residues coordinate substrate: H355, D399, and R403. Residues 435–522 are c; sequence GSTTQRWVNS…GTAVWQYTTT (88 aa). Positions 523–609 are d; it reads ESSPIIGNVG…SAAFNNFNVL (87 aa). Residues 526 to 606 enclose the IPT/TIG domain; the sequence is PIIGNVGPTM…GTTSAAFNNF (81 aa). In terms of domain architecture, CBM20 spans 608-713; that stretch reads VLTADQVTVR…VATVTVDWQN (106 aa). The interval 610-713 is e; that stretch reads TADQVTVRFK…VATVTVDWQN (104 aa).

Belongs to the glycosyl hydrolase 13 family. Monomer. Ca(2+) serves as cofactor.

It localises to the secreted. It catalyses the reaction Cyclizes part of a (1-&gt;4)-alpha-D-glucan chain by formation of a (1-&gt;4)-alpha-D-glucosidic bond.. This is Cyclomaltodextrin glucanotransferase from Paenibacillus macerans (Bacillus macerans).